Here is a 100-residue protein sequence, read N- to C-terminus: Small ribosomal subunit protein bS20 (100 aa).

The protein belongs to the bacterial ribosomal protein bS20 family.

Functionally, binds directly to 16S ribosomal RNA. The sequence is that of Small ribosomal subunit protein bS20 from Prochlorococcus marinus (strain MIT 9211).